Consider the following 465-residue polypeptide: Adenosylhomocysteinase (465 aa).

3 residues coordinate substrate: Thr56, Asp131, and Glu191. Position 192–194 (192–194 (TTT)) interacts with NAD(+). Substrate contacts are provided by Lys221 and Asp225. NAD(+) is bound by residues Asn226, 255-260 (GYGDVG), Glu278, Asn313, 334-336 (IGH), and Asn379.

It belongs to the adenosylhomocysteinase family. NAD(+) serves as cofactor.

It localises to the cytoplasm. It catalyses the reaction S-adenosyl-L-homocysteine + H2O = L-homocysteine + adenosine. The protein operates within amino-acid biosynthesis; L-homocysteine biosynthesis; L-homocysteine from S-adenosyl-L-homocysteine: step 1/1. May play a key role in the regulation of the intracellular concentration of adenosylhomocysteine. This Bartonella tribocorum (strain CIP 105476 / IBS 506) protein is Adenosylhomocysteinase.